The chain runs to 272 residues: Shikimate dehydrogenase (NADP(+)) (272 aa).

Residues 14 to 16 (SKS) and Thr61 each bind shikimate. Lys65 functions as the Proton acceptor in the catalytic mechanism. Glu77 is a binding site for NADP(+). Positions 86 and 102 each coordinate shikimate. NADP(+) contacts are provided by residues 126–130 (GAGGA), 149–154 (NRTADK), and Met212. Residue Tyr214 participates in shikimate binding. Residue Gly237 participates in NADP(+) binding.

This sequence belongs to the shikimate dehydrogenase family. In terms of assembly, homodimer.

The catalysed reaction is shikimate + NADP(+) = 3-dehydroshikimate + NADPH + H(+). It functions in the pathway metabolic intermediate biosynthesis; chorismate biosynthesis; chorismate from D-erythrose 4-phosphate and phosphoenolpyruvate: step 4/7. Involved in the biosynthesis of the chorismate, which leads to the biosynthesis of aromatic amino acids. Catalyzes the reversible NADPH linked reduction of 3-dehydroshikimate (DHSA) to yield shikimate (SA). The sequence is that of Shikimate dehydrogenase (NADP(+)) from Glaesserella parasuis serovar 5 (strain SH0165) (Haemophilus parasuis).